Here is a 67-residue protein sequence, read N- to C-terminus: DNA-directed RNA polymerase subunit omega (67 aa).

The protein belongs to the RNA polymerase subunit omega family. In terms of assembly, the RNAP catalytic core consists of 2 alpha, 1 beta, 1 beta' and 1 omega subunit. When a sigma factor is associated with the core the holoenzyme is formed, which can initiate transcription.

It catalyses the reaction RNA(n) + a ribonucleoside 5'-triphosphate = RNA(n+1) + diphosphate. In terms of biological role, promotes RNA polymerase assembly. Latches the N- and C-terminal regions of the beta' subunit thereby facilitating its interaction with the beta and alpha subunits. This is DNA-directed RNA polymerase subunit omega from Legionella pneumophila (strain Paris).